The primary structure comprises 603 residues: Elongation factor 4 (603 aa).

Residues 2–184 form the tr-type G domain; it reads NHIRNFSIIA…AIVHKMPAPR (183 aa). GTP is bound by residues 14–19 and 131–134; these read DHGKST and NKMD.

This sequence belongs to the TRAFAC class translation factor GTPase superfamily. Classic translation factor GTPase family. LepA subfamily.

The protein localises to the cell inner membrane. It carries out the reaction GTP + H2O = GDP + phosphate + H(+). Required for accurate and efficient protein synthesis under certain stress conditions. May act as a fidelity factor of the translation reaction, by catalyzing a one-codon backward translocation of tRNAs on improperly translocated ribosomes. Back-translocation proceeds from a post-translocation (POST) complex to a pre-translocation (PRE) complex, thus giving elongation factor G a second chance to translocate the tRNAs correctly. Binds to ribosomes in a GTP-dependent manner. The protein is Elongation factor 4 of Variovorax paradoxus (strain S110).